Here is a 121-residue protein sequence, read N- to C-terminus: Large ribosomal subunit protein uL14 (121 aa).

Belongs to the universal ribosomal protein uL14 family. Part of the 50S ribosomal subunit. Forms a cluster with proteins L3 and L19. In the 70S ribosome, L14 and L19 interact and together make contacts with the 16S rRNA in bridges B5 and B8.

Its function is as follows. Binds to 23S rRNA. Forms part of two intersubunit bridges in the 70S ribosome. The sequence is that of Large ribosomal subunit protein uL14 from Parasynechococcus marenigrum (strain WH8102).